We begin with the raw amino-acid sequence, 374 residues long: Alanine racemase (374 aa).

Lysine 44 serves as the catalytic Proton acceptor; specific for D-alanine. Residue lysine 44 is modified to N6-(pyridoxal phosphate)lysine. Arginine 139 serves as a coordination point for substrate. The active-site Proton acceptor; specific for L-alanine is the tyrosine 269. Methionine 317 lines the substrate pocket.

This sequence belongs to the alanine racemase family. Requires pyridoxal 5'-phosphate as cofactor.

The catalysed reaction is L-alanine = D-alanine. It functions in the pathway amino-acid biosynthesis; D-alanine biosynthesis; D-alanine from L-alanine: step 1/1. In terms of biological role, catalyzes the interconversion of L-alanine and D-alanine. May also act on other amino acids. The polypeptide is Alanine racemase (alr) (Bordetella avium (strain 197N)).